Here is a 478-residue protein sequence, read N- to C-terminus: Aspartyl/glutamyl-tRNA(Asn/Gln) amidotransferase subunit B (478 aa).

Belongs to the GatB/GatE family. GatB subfamily. In terms of assembly, heterotrimer of A, B and C subunits.

The catalysed reaction is L-glutamyl-tRNA(Gln) + L-glutamine + ATP + H2O = L-glutaminyl-tRNA(Gln) + L-glutamate + ADP + phosphate + H(+). It catalyses the reaction L-aspartyl-tRNA(Asn) + L-glutamine + ATP + H2O = L-asparaginyl-tRNA(Asn) + L-glutamate + ADP + phosphate + 2 H(+). Allows the formation of correctly charged Asn-tRNA(Asn) or Gln-tRNA(Gln) through the transamidation of misacylated Asp-tRNA(Asn) or Glu-tRNA(Gln) in organisms which lack either or both of asparaginyl-tRNA or glutaminyl-tRNA synthetases. The reaction takes place in the presence of glutamine and ATP through an activated phospho-Asp-tRNA(Asn) or phospho-Glu-tRNA(Gln). The sequence is that of Aspartyl/glutamyl-tRNA(Asn/Gln) amidotransferase subunit B from Lachnoclostridium phytofermentans (strain ATCC 700394 / DSM 18823 / ISDg) (Clostridium phytofermentans).